A 644-amino-acid chain; its full sequence is uncharacterized protein (644 aa).

Position 254 to 261 (254 to 261) interacts with ATP; the sequence is GKMGAGKS.

This is an uncharacterized protein from Bacillus anthracis.